A 506-amino-acid polypeptide reads, in one-letter code: MNTMTLTPGQLSLSQLYDVWRHPVQLRLDASAIDGINASVACVNDIVAEGRTAYGINTGFGLLAQTRIADEDLQNLQRSLVLSHAAGVGDPLDDAMVRLIMVLKINSLARGFSGIRLSVIEALIALVNAGVYPLIPAKGSVGASGDLAPLAHLSLTLLGEGKARWQGEWLPAQTALKKAGLEPVALAAKEGLALLNGTQASTAFALRGLFEAQELFASAVVCGALTTEAVLGSRRPFDARIHAARGQQGQIDVARLFRHLLTDTSAIAESHHHCHKVQDPYSLRCQPQVMGACLTQLRQTKEVLLAEANAVSDNPLVFADAGEVISGGNFHAEPVAMAADNLALAIAEIGALSERRIALMMDKHMSQLPPFLVKNGGVNSGFMIAQVTAAALASENKALAHPHSVDSLPTSANQEDHVSMAPAAGRLLWEMAANTRGIIAVEWLAACQGIDLREGLTSSPLLEQARQTLREQVAHYTQDRFFAPDIECATALLAQGALQRLVPDFM.

The 5-imidazolinone (Ala-Gly) cross-link spans 143-145; sequence ASG. S144 bears the 2,3-didehydroalanine (Ser) mark.

This sequence belongs to the PAL/histidase family. Post-translationally, contains an active site 4-methylidene-imidazol-5-one (MIO), which is formed autocatalytically by cyclization and dehydration of residues Ala-Ser-Gly.

Its subcellular location is the cytoplasm. It catalyses the reaction L-histidine = trans-urocanate + NH4(+). The protein operates within amino-acid degradation; L-histidine degradation into L-glutamate; N-formimidoyl-L-glutamate from L-histidine: step 1/3. In Salmonella gallinarum (strain 287/91 / NCTC 13346), this protein is Histidine ammonia-lyase.